We begin with the raw amino-acid sequence, 464 residues long: Trigger factor (464 aa).

The 80-residue stretch at 166 to 245 (GDFLTIDITA…VKAVKERELP (80 aa)) folds into the PPIase FKBP-type domain. A disordered region spans residues 426–464 (FVRPGGEEEAPAAEVTEADTAEGEATEVPAEDEKAEAKA). Positions 432–455 (EEEAPAAEVTEADTAEGEATEVPA) are enriched in acidic residues.

This sequence belongs to the FKBP-type PPIase family. Tig subfamily.

The protein localises to the cytoplasm. It carries out the reaction [protein]-peptidylproline (omega=180) = [protein]-peptidylproline (omega=0). Functionally, involved in protein export. Acts as a chaperone by maintaining the newly synthesized protein in an open conformation. Functions as a peptidyl-prolyl cis-trans isomerase. This is Trigger factor from Pseudarthrobacter chlorophenolicus (strain ATCC 700700 / DSM 12829 / CIP 107037 / JCM 12360 / KCTC 9906 / NCIMB 13794 / A6) (Arthrobacter chlorophenolicus).